The chain runs to 111 residues: Large ribosomal subunit protein uL24 (111 aa).

This sequence belongs to the universal ribosomal protein uL24 family. In terms of assembly, part of the 50S ribosomal subunit.

In terms of biological role, one of two assembly initiator proteins, it binds directly to the 5'-end of the 23S rRNA, where it nucleates assembly of the 50S subunit. One of the proteins that surrounds the polypeptide exit tunnel on the outside of the subunit. This Heliobacterium modesticaldum (strain ATCC 51547 / Ice1) protein is Large ribosomal subunit protein uL24.